We begin with the raw amino-acid sequence, 215 residues long: Adenylate kinase (215 aa).

10-15 (GAGKGT) is an ATP binding site. An NMP region spans residues 30–59 (STGDMFRAAMKNNTELGRKAKSFMDNGDLV). AMP is bound by residues Thr31, Arg36, 57-59 (DLV), 85-88 (GFPR), and Gln92. Residues 126 to 163 (GRWICRTCGKTYHEIYNPPKVAGKCDLDGGELYQRDDD) are LID. Arg127 is an ATP binding site. Positions 130 and 133 each coordinate Zn(2+). Position 136-137 (136-137 (TY)) interacts with ATP. 2 residues coordinate Zn(2+): Cys150 and Asp153. Positions 160 and 171 each coordinate AMP. ATP is bound at residue Gln199.

Belongs to the adenylate kinase family. Monomer.

It localises to the cytoplasm. The enzyme catalyses AMP + ATP = 2 ADP. It participates in purine metabolism; AMP biosynthesis via salvage pathway; AMP from ADP: step 1/1. Catalyzes the reversible transfer of the terminal phosphate group between ATP and AMP. Plays an important role in cellular energy homeostasis and in adenine nucleotide metabolism. The protein is Adenylate kinase of Listeria monocytogenes serotype 4a (strain HCC23).